The chain runs to 179 residues: Endoribonuclease YbeY (179 aa).

Residues His141, His145, and His151 each contribute to the Zn(2+) site.

The protein belongs to the endoribonuclease YbeY family. It depends on Zn(2+) as a cofactor.

It localises to the cytoplasm. Functionally, single strand-specific metallo-endoribonuclease involved in late-stage 70S ribosome quality control and in maturation of the 3' terminus of the 16S rRNA. This is Endoribonuclease YbeY from Synechocystis sp. (strain ATCC 27184 / PCC 6803 / Kazusa).